Reading from the N-terminus, the 235-residue chain is UPF0758 protein COPRO5265_1522 (235 aa).

Positions 109–235 constitute an MPN domain; it reads RITTPEDAIE…HVSLAREKLI (127 aa). Zn(2+) contacts are provided by His184, His186, and Asp197. The JAMM motif motif lies at 184 to 197; that stretch reads HNHPSGDPSPSRED.

Belongs to the UPF0758 family.

This Coprothermobacter proteolyticus (strain ATCC 35245 / DSM 5265 / OCM 4 / BT) protein is UPF0758 protein COPRO5265_1522.